Here is a 382-residue protein sequence, read N- to C-terminus: Proton extrusion protein PxcA (382 aa).

4 helical membrane-spanning segments follow: residues 162–182 (VLLL…TYLI), 257–277 (AIKN…VCLM), 305–325 (IILF…SVLL), and 340–360 (FVNL…KYWI).

It belongs to the CemA family.

It is found in the cell inner membrane. Its function is as follows. Required for H(+) efflux immediately after light irradiation to form a rapid H(+) concentration gradient across the thylakoid membranes. Together with PxcL, contributes to transient H(+) uptake following dark to light transition. This chain is Proton extrusion protein PxcA, found in Synechococcus sp. (strain CC9605).